Consider the following 164-residue polypeptide: NADH-quinone oxidoreductase subunit I (164 aa).

2 4Fe-4S ferredoxin-type domains span residues 55-85 and 95-124; these read LRRYPNGEERCIACKLCEAICPAQAITIDAE and TRYDIDMTKCIYCGFCQEACPVDAIVEGPN. C65, C68, C71, C75, C104, C107, C110, and C114 together coordinate [4Fe-4S] cluster.

Belongs to the complex I 23 kDa subunit family. In terms of assembly, NDH-1 is composed of 14 different subunits. Subunits NuoA, H, J, K, L, M, N constitute the membrane sector of the complex. [4Fe-4S] cluster serves as cofactor.

Its subcellular location is the cell inner membrane. The catalysed reaction is a quinone + NADH + 5 H(+)(in) = a quinol + NAD(+) + 4 H(+)(out). Its function is as follows. NDH-1 shuttles electrons from NADH, via FMN and iron-sulfur (Fe-S) centers, to quinones in the respiratory chain. The immediate electron acceptor for the enzyme in this species is believed to be ubiquinone. Couples the redox reaction to proton translocation (for every two electrons transferred, four hydrogen ions are translocated across the cytoplasmic membrane), and thus conserves the redox energy in a proton gradient. The protein is NADH-quinone oxidoreductase subunit I of Dinoroseobacter shibae (strain DSM 16493 / NCIMB 14021 / DFL 12).